The following is a 67-amino-acid chain: DNA-directed RNA polymerase subunit omega (67 aa).

This sequence belongs to the RNA polymerase subunit omega family. The RNAP catalytic core consists of 2 alpha, 1 beta, 1 beta' and 1 omega subunit. When a sigma factor is associated with the core the holoenzyme is formed, which can initiate transcription.

The enzyme catalyses RNA(n) + a ribonucleoside 5'-triphosphate = RNA(n+1) + diphosphate. Its function is as follows. Promotes RNA polymerase assembly. Latches the N- and C-terminal regions of the beta' subunit thereby facilitating its interaction with the beta and alpha subunits. In Nitrosomonas eutropha (strain DSM 101675 / C91 / Nm57), this protein is DNA-directed RNA polymerase subunit omega.